The sequence spans 354 residues: MSLRKIIHVDCDCFYAAIEMRDDPRLAGRPMAVGGSPDHRGVIATCNYEARAYGVRSAMSSRHALKLCPDLLIVKPRFEAYREASREIHTIFRDYTELIEPLSLDEAYLDVSDSQWYSGSATRIAEDIRRRVARTLHITVSAGVAPNKFLAKIASDWRKPNGLFVITPNEVETFVAALPVARLHGVGKVTADKLTRLGIETCLHLREWSRLALVREFGSFGERLWGLARGIDERAVHNDSRRQSVSVENTYDTDLPDLASCLARLPDLLASLNERIARMDSSYLPDKPFVKVKFHDFSQTTMEQAGAGRDLESYRQLLGQAFARGGKPVRLLGVGVRLRDLRGAHEQLELFPPK.

The UmuC domain maps to 6–187 (IIHVDCDCFY…LPVARLHGVG (182 aa)). Mg(2+) contacts are provided by aspartate 10 and aspartate 105. Glutamate 106 is a catalytic residue.

It belongs to the DNA polymerase type-Y family. In terms of assembly, monomer. Mg(2+) is required as a cofactor.

The protein localises to the cytoplasm. It catalyses the reaction DNA(n) + a 2'-deoxyribonucleoside 5'-triphosphate = DNA(n+1) + diphosphate. In terms of biological role, poorly processive, error-prone DNA polymerase involved in untargeted mutagenesis. Copies undamaged DNA at stalled replication forks, which arise in vivo from mismatched or misaligned primer ends. These misaligned primers can be extended by PolIV. Exhibits no 3'-5' exonuclease (proofreading) activity. May be involved in translesional synthesis, in conjunction with the beta clamp from PolIII. This Pseudomonas putida (strain ATCC 700007 / DSM 6899 / JCM 31910 / BCRC 17059 / LMG 24140 / F1) protein is DNA polymerase IV.